The sequence spans 148 residues: Photosystem II extrinsic protein U, chloroplastic (148 aa).

The N-terminal 32 residues, 1 to 32 (MKLAVFAVLISTVAAFVAPNGVQRAATTELNA), are a transit peptide targeting the chloroplast. A thylakoid-targeting transit peptide spans 33–54 (ERREFLSAAAVAAGLAFPLTAN).

It belongs to the PsbU family. In terms of assembly, PSII is composed of 1 copy each of membrane proteins PsbA, PsbB, PsbC, PsbD, PsbE, PsbF, PsbH, PsbI, PsbJ, PsbK, PsbL, PsbM, PsbT, PsbX, PsbY, PsbZ, Psb30/Ycf12, at least 3 peripheral proteins of the oxygen-evolving complex and a large number of cofactors. It forms dimeric complexes. The oxygen-evolving complex may be composed of PsbO, PsbQ', PsbV and PsbU.

Its subcellular location is the plastid. It is found in the chloroplast thylakoid membrane. Functionally, one of the extrinsic, lumenal subunits of photosystem II (PSII), which stabilize and protect the oxygen-evolving complex. PSII is a light-driven water plastoquinone oxidoreductase, using light energy to abstract electrons from H(2)O, generating a proton gradient subsequently used for ATP formation. Stabilizes the structure of photosystem II oxygen-evolving complex (OEC), the ion environment of oxygen evolution and protects the OEC against heat-induced inactivation. The chain is Photosystem II extrinsic protein U, chloroplastic from Phaeodactylum tricornutum (Diatom).